We begin with the raw amino-acid sequence, 250 residues long: DNA repair protein RecO (250 aa).

Belongs to the RecO family.

Its function is as follows. Involved in DNA repair and RecF pathway recombination. The polypeptide is DNA repair protein RecO (Beijerinckia indica subsp. indica (strain ATCC 9039 / DSM 1715 / NCIMB 8712)).